The primary structure comprises 473 residues: Spliceosome-associated protein CWC27 homolog (473 aa).

An N-acetylserine modification is found at S2. Residues 11-166 (TNGKVLLKTT…NSHKIRSCEV (156 aa)) enclose the PPIase cyclophilin-type domain. Residues 178-193 (EIKKPKKEKPEEEVKK) show a composition bias toward basic and acidic residues. Disordered stretches follow at residues 178 to 197 (EIKK…LKPK), 203 to 383 (SLLS…TSRE), and 401 to 473 (IAET…KERR). A coiled-coil region spans residues 206–230 (SFGEEAEEEEEEVNRVSQSMKGKSK). A compositionally biased stretch (basic and acidic residues) spans 231-241 (SSHDLLKDDPH). The short motif at 252-254 (RGD) is the Cell attachment site element. The segment covering 256-266 (AEDSDDDGEYE) has biased composition (acidic residues). Composition is skewed to basic and acidic residues over residues 267 to 348 (GAEH…KRSE) and 360 to 372 (EYRR…EALR). A coiled-coil region spans residues 311–378 (VSRSEELRKE…EALRKQQAKT (68 aa)). Phosphoserine is present on S347. The span at 405-419 (PENDISETEVEDDEG) shows a compositional bias: acidic residues. 2 stretches are compositionally biased toward basic and acidic residues: residues 426 to 438 (QFED…KDAS) and 458 to 473 (RREE…KERR).

The protein belongs to the cyclophilin-type PPIase family. In terms of assembly, part of the activated spliceosome B/catalytic step 1 spliceosome, one of the forms of the spliceosome which has a well-formed active site but still cannot catalyze the branching reaction and is composed at least of 52 proteins, the U2, U5 and U6 snRNAs and the pre-mRNA. Recruited during early steps of activated spliceosome B maturation, it is probably one of the first proteins released from this complex as he matures to the spliceosome C complex. Component of the minor spliceosome, which splices U12-type introns.

It localises to the nucleus. Functionally, as part of the spliceosome, plays a role in pre-mRNA splicing. Probable inactive PPIase with no peptidyl-prolyl cis-trans isomerase activity. As a component of the minor spliceosome, involved in the splicing of U12-type introns in pre-mRNAs. This Bos taurus (Bovine) protein is Spliceosome-associated protein CWC27 homolog.